Consider the following 357-residue polypeptide: Phosphoribosylformylglycinamidine cyclo-ligase (357 aa).

Belongs to the AIR synthase family.

It is found in the cytoplasm. The enzyme catalyses 2-formamido-N(1)-(5-O-phospho-beta-D-ribosyl)acetamidine + ATP = 5-amino-1-(5-phospho-beta-D-ribosyl)imidazole + ADP + phosphate + H(+). Its pathway is purine metabolism; IMP biosynthesis via de novo pathway; 5-amino-1-(5-phospho-D-ribosyl)imidazole from N(2)-formyl-N(1)-(5-phospho-D-ribosyl)glycinamide: step 2/2. The sequence is that of Phosphoribosylformylglycinamidine cyclo-ligase from Rhodopseudomonas palustris (strain ATCC BAA-98 / CGA009).